The primary structure comprises 493 residues: Galactose-1-phosphate uridylyltransferase (493 aa).

The protein belongs to the galactose-1-phosphate uridylyltransferase type 2 family.

The protein localises to the cytoplasm. It carries out the reaction alpha-D-galactose 1-phosphate + UDP-alpha-D-glucose = alpha-D-glucose 1-phosphate + UDP-alpha-D-galactose. It participates in carbohydrate metabolism; galactose metabolism. This Lactococcus lactis subsp. cremoris (strain MG1363) protein is Galactose-1-phosphate uridylyltransferase.